A 494-amino-acid polypeptide reads, in one-letter code: MNNLNLIPVIPEIFLAAATCAILLIDLFLSDAKRYLTYVLSLATLVVCAVLSLSDFNAGATSYSFGNMFVSDPMSNLLKFCTYIAVGLTLVYSRQYLEDRQMVNGRLGGEFYILSLFTVLGQMVMMSANNFLIIYLGLEIMSLSLYALVAFRRDNAVAIEAAMKYFVLGALASGFLLYGISMLYGATGSLDLTEVARVIATGAVNKPVLIFGLVFVVAGLAFKLGAVPFHMWVPDVYQGAPTAVTLMLGGAPKLAAFAITIRLLVEALPALAIDWQQMLTILSVLSMAIGNITAIMQTNIKRMLAYSTISQVGFILLGLLSGVVAGADGSTTNGYGAAMFYVITYVLTTLGMFGVIMLLSRAGFEADNIDDFKGLNQRSPWFAFVTLLLMFSLAGVPPVVGFYAKLAVLQAVLSTGQIWLAVVAVLFSLIGAFYYLRVVKVMYFDEPADKAKIVASKDVTVTLSINGAALLALGLVPGPLMTACAAAIIKTLAS.

14 helical membrane-spanning segments follow: residues 9–29 (VIPE…DLFL), 36–56 (LTYV…LSDF), 73–93 (PMSN…LVYS), 107–127 (LGGE…VMMS), 131–151 (FLII…LVAF), 166–186 (FVLG…LYGA), 209–229 (LIFG…AVPF), 241–261 (PTAV…AITI), 278–298 (MLTI…IMQT), 304–324 (LAYS…SGVV), 339–359 (MFYV…IMLL), 382–402 (FAFV…VVGF), 416–436 (GQIW…FYYL), and 469–489 (ALLA…AAII).

This sequence belongs to the complex I subunit 2 family. NDH-1 is composed of 14 different subunits. Subunits NuoA, H, J, K, L, M, N constitute the membrane sector of the complex.

It localises to the cell inner membrane. It carries out the reaction a quinone + NADH + 5 H(+)(in) = a quinol + NAD(+) + 4 H(+)(out). Its function is as follows. NDH-1 shuttles electrons from NADH, via FMN and iron-sulfur (Fe-S) centers, to quinones in the respiratory chain. The immediate electron acceptor for the enzyme in this species is believed to be ubiquinone. Couples the redox reaction to proton translocation (for every two electrons transferred, four hydrogen ions are translocated across the cytoplasmic membrane), and thus conserves the redox energy in a proton gradient. The protein is NADH-quinone oxidoreductase subunit N of Herminiimonas arsenicoxydans.